The following is a 353-amino-acid chain: MAKIALKDVRKVYGGNVEAIKSVSMEIADGEMIVLVGPSGCGKSTLLRMIAGLEGISGGQIMIGDRVVNDLEPSDRDIAMVFQNYALYPHMTVRQNLAYGLKNRNTPKEEIERRITEAAKALEIEQFLERKPRQLSGGQRQRVAMGRAIVRKPAAFLFDEPLSNLDAKLRVQMRVEIRRLQRSLATTSVYVTHDQMEAMTLADRLVVLNAGRIEQMGTPIELYEKPATTFVATFIGSPSMNLLAHGAASSNVSAGWSVNAAAALPPTVATLGIRPEDITLAEAEPADAAFAGTVQVDAVELVGAESYVHGSFPDGTTIVFRVPGRSQLRIGEMLKIAAQAKDFHLFDAAGKRI.

The ABC transporter domain occupies isoleucine 4 to isoleucine 235. Glycine 37 to serine 44 provides a ligand contact to ATP.

This sequence belongs to the ABC transporter superfamily. sn-glycerol-3-phosphate importer (TC 3.A.1.1.3) family. In terms of assembly, the complex is composed of two ATP-binding proteins (UgpC), two transmembrane proteins (UgpA and UgpE) and a solute-binding protein (UgpB).

The protein resides in the cell inner membrane. The enzyme catalyses sn-glycerol 3-phosphate(out) + ATP + H2O = sn-glycerol 3-phosphate(in) + ADP + phosphate + H(+). Part of the ABC transporter complex UgpBAEC involved in sn-glycerol-3-phosphate (G3P) import. Responsible for energy coupling to the transport system. In Agrobacterium fabrum (strain C58 / ATCC 33970) (Agrobacterium tumefaciens (strain C58)), this protein is sn-glycerol-3-phosphate import ATP-binding protein UgpC 3.